The following is a 174-amino-acid chain: Large ribosomal subunit protein uL10 (174 aa).

Belongs to the universal ribosomal protein uL10 family. As to quaternary structure, part of the ribosomal stalk of the 50S ribosomal subunit. The N-terminus interacts with L11 and the large rRNA to form the base of the stalk. The C-terminus forms an elongated spine to which L12 dimers bind in a sequential fashion forming a multimeric L10(L12)X complex.

Its function is as follows. Forms part of the ribosomal stalk, playing a central role in the interaction of the ribosome with GTP-bound translation factors. This Synechococcus sp. (strain RCC307) protein is Large ribosomal subunit protein uL10.